The chain runs to 98 residues: Citrate lyase acyl carrier protein (98 aa).

Position 14 is an O-(phosphoribosyl dephospho-coenzyme A)serine (Ser14).

This sequence belongs to the CitD family. In terms of assembly, oligomer with a subunit composition of (alpha,beta,gamma)6.

It localises to the cytoplasm. Its function is as follows. Covalent carrier of the coenzyme of citrate lyase. This chain is Citrate lyase acyl carrier protein, found in Shigella boydii serotype 4 (strain Sb227).